Reading from the N-terminus, the 829-residue chain is RNA-directed RNA polymerase (829 aa).

The interval 1–39 (MKEPVDCRLSTPAGFSGTVPPPGRTKAARPGTIPVRRSR) is disordered.

In terms of assembly, forms a ribonucleoprotein complex with the 20S RNA, where a single polymerase molecule binds to a single viral RNA genome. Since the viral RNA is not encapsidated, ribonucleoprotein complex formation appears to be the strategy to survive in the host as persistent virus.

The protein localises to the host cytoplasm. It carries out the reaction RNA(n) + a ribonucleoside 5'-triphosphate = RNA(n+1) + diphosphate. RNA-directed RNA polymerase that replicates the viral (+) and (-) genome. This is RNA-directed RNA polymerase from Saccharomyces cerevisiae (Baker's yeast).